The sequence spans 132 residues: Interleukin-4 (132 aa).

A signal peptide spans 1-24; that stretch reads MGLTSQLIPTLVCLLALTSTFVHG. N-linked (GlcNAc...) asparagine glycans are attached at residues asparagine 28, asparagine 45, asparagine 62, asparagine 83, asparagine 95, and asparagine 101. 2 disulfide bridges follow: cysteine 48/cysteine 84 and cysteine 70/cysteine 104.

It belongs to the IL-4/IL-13 family.

It localises to the secreted. Functionally, participates in at least several B-cell activation processes as well as of other cell types. It is a costimulator of DNA-synthesis. It induces the expression of class II MHC molecules on resting B-cells. It enhances both secretion and cell surface expression of IgE and IgG1. It also regulates the expression of the low affinity Fc receptor for IgE (CD23) on both lymphocytes and monocytes. Positively regulates IL31RA expression in macrophages. Stimulates autophagy in dendritic cells by interfering with mTORC1 signaling and through the induction of RUFY4. This chain is Interleukin-4 (IL4), found in Canis lupus familiaris (Dog).